A 521-amino-acid polypeptide reads, in one-letter code: Cell adhesion molecule CEACAM1 (521 aa).

A signal peptide spans 1-34 (MELASAHLHKGQVPWGGLLLTASLLASWSPATTA). Residues 35–142 (EVTIEAVPPQ…QATVRFHVHP (108 aa)) form the Ig-like V-type domain. Topologically, residues 35-428 (EVTIEAVPPQ…GGLSDGAIAG (394 aa)) are extracellular. Residues 39–142 (EAVPPQVAED…QATVRFHVHP (104 aa)) form a required for homophilic binding region. Asparagine 71, asparagine 89, asparagine 104, asparagine 148, asparagine 152, asparagine 199, asparagine 206, asparagine 210, asparagine 226, asparagine 258, asparagine 290, asparagine 294, asparagine 304, asparagine 317, asparagine 333, and asparagine 375 each carry an N-linked (GlcNAc...) asparagine glycan. Ig-like C2-type domains lie at 147–234 (PNIT…FSLN), 239–319 (PDTP…KNIT), and 323–411 (PVTQ…IKLD). An intrachain disulfide couples cysteine 167 to cysteine 217. Cysteine 261 and cysteine 301 form a disulfide bridge. An intrachain disulfide couples cysteine 346 to cysteine 394. Residues 429 to 447 (IVIGVVAGVALIAGLAYFL) form a helical membrane-spanning segment. Residues 445-457 (YFLYSRKSGGGSD) form an interaction with calmodulin region. The interval 447-521 (LYSRKSGGGS…ETVYSEVKKK (75 aa)) is interaction with FLNA. The Cytoplasmic portion of the chain corresponds to 448–521 (YSRKSGGGSD…ETVYSEVKKK (74 aa)). The tract at residues 455 to 521 (GSDQRDLTEH…ETVYSEVKKK (67 aa)) is disordered. Residues 457–466 (DQRDLTEHKP) show a composition bias toward basic and acidic residues. A compositionally biased stretch (polar residues) spans 467–481 (STSNHNLAPSDNSPN). The required for interaction with PTPN11 and PTPN6 and for control of phosphorylation level stretch occupies residues 484–521 (DDVAYTVLNFNSQQPNRPTSAPSSPRATETVYSEVKKK). Tyrosine 488 bears the Phosphotyrosine; by SRC, LCK, INSR and EGFR mark. Polar residues predominate over residues 491 to 514 (LNFNSQQPNRPTSAPSSPRATETV). Serine 503 is subject to Phosphoserine. Phosphotyrosine; by INSR, SRC and LCK is present on tyrosine 515. The tract at residues 515 to 518 (YSEV) is essential for interaction with PTPN11 and PTPN6.

Belongs to the immunoglobulin superfamily. CEA family. As to quaternary structure, (Microbial infection) Interacts with MHV S1 spike glycoprotein. Monomer. Oligomer. Heterodimer. Homodimer. Cis-dimer/oligomer (via Ig-like C2-type and/or via cytoplasmic domains); induced by trans-homophilic cell adhesion through an allosteric mechanism transmitted by the Ig-like V-type domain, and is regulated by intracellular calcium and calmodulin. Interacts (via cytoplasmic domain) with calmodulin in a calcium dependent manner; reduces homophilic cell adhesion through dissociation of dimer. Isoform 1 interacts (via cytoplasmic domain) with PTPN11 (preferentially) and PTPN6; cis-homodimer form is preferred; this interaction is decreased by formation of isoform 1 / isoform 2 cis-heterodimers and is dependent on the monomer/dimer equilibrium; this interaction is phosphorylation-dependent. Isoform 1 interacts with LYN. Isoform 1 interacts (via cytoplasmic domain) with SRC (via SH2 domain); this interaction is regulated by trans-homophilic cell adhesion. Isoform 1 interacts with LCK; mediates phosphorylation at Tyr-488 and Tyr-515 resulting in PTPN6 association. Isoform 1 interacts with PTPN6; this interaction is phosphorylation-dependent and causes a profound decrease in TCR stimulation-induced CD247 and ZAP70 phosphorylation. Isoform 1 interacts with TCR/CD3 complex through TCR beta chain and CD3E; colocalizes at the cell surface and upon stimulation of the TCR/CD3 complex recruits PTPN6 in the TCR/CD3 complex, resulting in dephosphorylation of CD247 and ZAP70. Isoform 1 interacts (via cytoplasmic domain) with SHC1 (via SH2 domain); SHC1 mediates interaction with INSR or EGFR in a Ser-503 phosphorylation-dependent manner. Isoform 1 interacts with EGFR; the interaction is indirect. Isoform 1 interacts with CSF3R; down-regulates the CSF3R-STAT3 pathway through recruitment of PTPN6 that dephosphorylates CSF3R. Isoform 1 (phosphorylated form) interacts with TLR4 and SYK; recruits PTPN6 that dephosphorylates SYK, reducing the production of reactive oxygen species (ROS) and lysosome disruption, leading to a reduction of the inflammasome activity. Isoform 1 interacts with FLNA; inhibits cell migration and cell scattering by interfering with the interaction of FLNA with RALA. Isoform 1 interacts (via cytoplasmic domain) with PXN; the interaction is phosphotyrosyl-dependent. Isoform 1 interacts with KLRK1; recruits PTPN6 that dephosphorylates VAV1. Isoform 1 interacts with CEACAM8. Isoform 1 interacts with FASN; this interaction is insulin and phosphorylation-dependent; reduces fatty-acid synthase activity. Interacts (via Ig-like V-type) with HAVCR2 (via Ig-like V-type); facilitates the maturation and cell surface expression of HAVCR2 thereby regulating T-cell tolerance induction. Isoform 2 interacts (via the cytoplasmic domain) with ANXA2; this interaction is regulated by phosphorylation and appears in the AIIt complex. Interacts (via Lewis X moieties) with CD209 (via C-type lectin domain); this interaction is regulated by the glycosylation pattern of CEACAM1 on cell types and regulates contact between dendritic cells and neutrophils. In terms of processing, phosphorylated on serine and tyrosine. Isoform 1 is phosphorylated on tyrosine by Src family kinases like SRC and LCK and by receptor like CSF3R, EGFR and INSR upon stimulation. Phosphorylated at Ser-503; mediates activity. Phosphorylated at Tyr-488; regulates activity. Phosphorylated at Tyr-488 by EGFR and INSR upon stimulation; this phosphorylation is Ser-503-phosphorylation-dependent; mediates cellular internalization; increases interaction with FASN. Phosphorylated at Tyr-488 and Tyr-515 by LCK; mediates PTPN6 association and is regulated by homophilic ligation of CEACAM1 in the absence of T-cell activation. Phosphorylated at Tyr-515; mediates interaction with PTPN11. Post-translationally, phosphorylated on serine and threonine. In terms of tissue distribution, expressed in granulocytes, lymphocytes, granulocytes, B cells, and T-cells. Expressed in bone. Highly expressed in liver and femur. Highly expressed in neutrophils, and to a lesser extent inmonocytes, and macrophages. Slightly higher expressed in peripheral blood neutrophils (PBNs). Intestinal T-cells predominantly express isoform 2 while extraintestinal T-cells mainly express isoform 1. Expressed in small intestine and colon.

It is found in the cell membrane. Its subcellular location is the lateral cell membrane. The protein resides in the apical cell membrane. The protein localises to the basal cell membrane. It localises to the cell junction. It is found in the adherens junction. Its subcellular location is the cytoplasmic vesicle. The protein resides in the secretory vesicle. The protein localises to the cell projection. It localises to the microvillus membrane. In terms of biological role, cell adhesion protein that mediates homophilic cell adhesion in a calcium-independent manner. Plays a role as coinhibitory receptor in immune response, insulin action and also functions as an activator during angiogenesis. Its coinhibitory receptor function is phosphorylation- and PTPN6 -dependent, which in turn, suppress signal transduction of associated receptors by dephosphorylation of their downstream effectors. Plays a role in immune response, of T-cells, natural killer (NK) and neutrophils. Upon TCR/CD3 complex stimulation, inhibits TCR-mediated cytotoxicity by blocking granule exocytosis by mediating homophilic binding to adjacent cells, allowing interaction with and phosphorylation by LCK and interaction with the TCR/CD3 complex which recruits PTPN6 resulting in dephosphorylation of CD247 and ZAP70. Also inhibits T-cell proliferation and cytokine production through inhibition of JNK cascade and plays a crucial role in regulating autoimmunity and anti-tumor immunity by inhibiting T-cell through its interaction with HAVCR2. Upon natural killer (NK) cells activation, inhibit KLRK1-mediated cytolysis of CEACAM1-bearing tumor cells by trans-homophilic interactions with CEACAM1 on the target cell and lead to cis-interaction between CEACAM1 and KLRK1, allowing PTPN6 recruitment and then VAV1 dephosphorylation. Upon neutrophils activation negatively regulates IL1B production by recruiting PTPN6 to a SYK-TLR4-CEACAM1 complex, that dephosphorylates SYK, reducing the production of reactive oxygen species (ROS) and lysosome disruption, which in turn, reduces the activity of the inflammasome. Down-regulates neutrophil production by acting as a coinhibitory receptor for CSF3R by downregulating the CSF3R-STAT3 pathway through recruitment of PTPN6 that dephosphorylates CSF3R. Also regulates insulin action by promoting INS clearance and regulating lipogenesis in liver through regulating insulin signaling. Upon INS stimulation, undergoes phosphorylation by INSR leading to INS clearance by increasing receptor-mediated insulin endocytosis. This inernalization promotes interaction with FASN leading to receptor-mediated insulin degradation and to reduction of FASN activity leading to negative regulation of fatty acid synthesis. INSR-mediated phosphorylation also provokes a down-regulation of cell proliferation through SHC1 interaction resulting in decrease coupling of SHC1 to the MAPK3/ERK1-MAPK1/ERK2 and phosphatidylinositol 3-kinase pathways. Functions as activator in angiogenesis by promoting blood vessel remodeling through endothelial cell differentiation and migration and in arteriogenesis by increasing the number of collateral arteries and collateral vessel calibers after ischemia. Also regulates vascular permeability through the VEGFR2 signaling pathway resulting in control of nitric oxide production. Down-regulates cell growth in response to EGF through its interaction with SHC1 that mediates interaction with EGFR resulting in decrease coupling of SHC1 to the MAPK3/ERK1-MAPK1/ERK2 pathway. Negatively regulates platelet aggregation by decreasing platelet adhesion on type I collagen through the GPVI-FcRgamma complex. Inhibits cell migration and cell scattering through interaction with FLNA; interferes with the interaction of FLNA with RALA. Mediates bile acid transport activity in a phosphorylation dependent manner. Negatively regulates osteoclastogenesis. Cell adhesion protein that mediates homophilic cell adhesion in a calcium-independent manner. Promotes populations of T-cells regulating IgA production and secretion associated with control of the commensal microbiota and resistance to enteropathogens. Its function is as follows. (Microbial infection) In case of murine coronavirus (MHV) infection, serves as receptor for MHV S1 spike glycoprotein. The polypeptide is Cell adhesion molecule CEACAM1 (Mus musculus (Mouse)).